The following is a 128-amino-acid chain: AECKVTVDSTDQMSFDTKAIEIDKSCKTFTVDLKHSGNLPKNVMGHNWVLTTQADMQPVATDGMAAGIDKNYLKEGDTRIIAHTKIIGAGETDSVTFDVSKLKADGKYMFFCSFPGHIAMMKGTVTLK.

The 128-residue stretch at Ala1 to Lys128 folds into the Plastocyanin-like domain. Residues Cys3 and Cys26 are joined by a disulfide bond. Residues His46, Cys112, His117, and Met121 each contribute to the Cu cation site.

The protein resides in the periplasm. In terms of biological role, transfers electrons from cytochrome c551 to cytochrome oxidase. The polypeptide is Azurin (Pseudomonas fluorescens biotype C).